Here is a 266-residue protein sequence, read N- to C-terminus: Ras-like protein family member 12 (266 aa).

Residues 27 to 34 (GRRGAGKS), 74 to 78 (DTADL), and 134 to 137 (NKLD) each bind GTP.

It belongs to the small GTPase superfamily. Ras family.

The catalysed reaction is GTP + H2O = GDP + phosphate + H(+). This chain is Ras-like protein family member 12 (Rasl12), found in Mus musculus (Mouse).